A 444-amino-acid polypeptide reads, in one-letter code: Ribulose bisphosphate carboxylase large chain (444 aa).

Lys5 is subject to N6,N6,N6-trimethyllysine. Residues Asn114 and Thr164 each contribute to the substrate site. The active-site Proton acceptor is the Lys166. A substrate-binding site is contributed by Lys168. Mg(2+) contacts are provided by Lys192, Asp194, and Glu195. Lys192 is modified (N6-carboxylysine). Residue His285 is the Proton acceptor of the active site. The substrate site is built by Arg286, His318, and Ser370.

Belongs to the RuBisCO large chain family. Type I subfamily. In terms of assembly, heterohexadecamer of 8 large chains and 8 small chains; disulfide-linked. The disulfide link is formed within the large subunit homodimers. Requires Mg(2+) as cofactor. In terms of processing, the disulfide bond which can form in the large chain dimeric partners within the hexadecamer appears to be associated with oxidative stress and protein turnover.

It is found in the plastid. The protein localises to the chloroplast. The enzyme catalyses 2 (2R)-3-phosphoglycerate + 2 H(+) = D-ribulose 1,5-bisphosphate + CO2 + H2O. The catalysed reaction is D-ribulose 1,5-bisphosphate + O2 = 2-phosphoglycolate + (2R)-3-phosphoglycerate + 2 H(+). Its function is as follows. RuBisCO catalyzes two reactions: the carboxylation of D-ribulose 1,5-bisphosphate, the primary event in carbon dioxide fixation, as well as the oxidative fragmentation of the pentose substrate in the photorespiration process. Both reactions occur simultaneously and in competition at the same active site. This chain is Ribulose bisphosphate carboxylase large chain, found in Botrychium strictum (Fern).